We begin with the raw amino-acid sequence, 436 residues long: Glutamate-1-semialdehyde 2,1-aminomutase (436 aa).

At lysine 272 the chain carries N6-(pyridoxal phosphate)lysine.

This sequence belongs to the class-III pyridoxal-phosphate-dependent aminotransferase family. HemL subfamily. Homodimer. Pyridoxal 5'-phosphate is required as a cofactor.

Its subcellular location is the cytoplasm. The catalysed reaction is (S)-4-amino-5-oxopentanoate = 5-aminolevulinate. Its pathway is porphyrin-containing compound metabolism; protoporphyrin-IX biosynthesis; 5-aminolevulinate from L-glutamyl-tRNA(Glu): step 2/2. The protein operates within porphyrin-containing compound metabolism; chlorophyll biosynthesis. The sequence is that of Glutamate-1-semialdehyde 2,1-aminomutase from Methylibium petroleiphilum (strain ATCC BAA-1232 / LMG 22953 / PM1).